The following is a 524-amino-acid chain: BEL1-like homeodomain protein 3 (524 aa).

The tract at residues 171–187 (SRYLKPTQQLLDEVVSV) is SR/KY domain. Basic and acidic residues-rich tracts occupy residues 195-205 (NKKMKNDKGQD) and 216-235 (EDDKSQSQELSPSERQELQS). The interval 195 to 236 (NKKMKNDKGQDFHNGSSDNITEDDKSQSQELSPSERQELQSK) is disordered. The tract at residues 229 to 300 (ERQELQSKKS…CLRDAIKEQI (72 aa)) is BELL domain. The homeobox DNA-binding region spans 346–408 (AWRPQRGLPE…NARVRLWKPM (63 aa)). Residues 429 to 463 (QDTKKMQETSQLKHEDSSSSQQQNQGNNNNNIPYT) form a disordered region. The span at 430–445 (DTKKMQETSQLKHEDS) shows a compositional bias: basic and acidic residues. The span at 446 to 459 (SSSQQQNQGNNNNN) shows a compositional bias: low complexity.

The protein belongs to the TALE/BELL homeobox family. As to quaternary structure, may form heterodimeric complex with the TALE/KNOX protein STM. Interacts with OFP1, OFP2, OFP3, OFP4, OFP5 and OFP15.

The protein localises to the nucleus. In terms of biological role, transcription factor that is responsive of the nuclear import of SHOOT MERISTEMLESS (STM). This chain is BEL1-like homeodomain protein 3 (BLH3), found in Arabidopsis thaliana (Mouse-ear cress).